Reading from the N-terminus, the 1577-residue chain is Dynamin-binding protein (1577 aa).

At M1 the chain carries N-acetylmethionine. 3 consecutive SH3 domains span residues 2–61 (EPGS…IVTI), 66–126 (EGER…ELCL), and 145–204 (YSMG…LLGP). The disordered stretch occupies residues 209 to 242 (DESVNAGSGDDSTLNDEVDVSPEEVESEGDEDDQ). Over residues 221–242 (TLNDEVDVSPEEVESEGDEDDQ) the composition is skewed to acidic residues. The 60-residue stretch at 243–302 (QAGTYGIALYRFQALESNELDFEVGDKIRILGTLEDGWLEGRLKGKTGIFPHRFVKLCPS) folds into the SH3 4 domain. Disordered regions lie at residues 307–361 (ETMA…EEPL) and 375–437 (GQDE…SRQC). The span at 400–410 (PDLSQEVNGIS) shows a compositional bias: polar residues. S494 is modified (phosphoserine). Disordered stretches follow at residues 519-547 (PERPKRRPGLPDKEPATEITPASQGDNLD) and 590-681 (RGSS…SEYT). A compositionally biased stretch (low complexity) spans 617–626 (TPTSTSPHLL). Residues 632 to 651 (KPGPPLVVRPSRPAPLPPPT) show a composition bias toward pro residues. The span at 652–662 (QQRLNTASPKP) shows a compositional bias: polar residues. Positions 672–681 (APEKEGSEYT) are enriched in basic and acidic residues. The residue at position 684 (S684) is a Phosphoserine. A coiled-coil region spans residues 705–755 (LDMHTRAQEELNLLLEEKQDESLRAETLETLKSYESTIQSLNLELQQLREM). The DH domain maps to 784–967 (KRAKVVAELL…KEINANINEY (184 aa)). The region spanning 1008–1217 (LKHLTGFAPQ…LKASDREGNL (210 aa)) is the BAR domain. The region spanning 1285–1348 (PPEKLFHVQR…YSSFLKPYNP (64 aa)) is the SH3 5 domain. Residues 1353–1375 (SDSSVVSHSSTESEHSGSSPSFH) show a composition bias toward low complexity. Disordered stretches follow at residues 1353–1381 (SDSSVVSHSSTESEHSGSSPSFHRQNSSS) and 1415–1510 (ETLG…LGSS). Polar residues-rich tracts occupy residues 1418–1428 (GVSSNTGNPET) and 1484–1497 (DQGSDSIKGTSRAC). Positions 1513–1576 (EGNQVYFAIY…PSNYIRKTEY (64 aa)) constitute an SH3 6 domain.

Binds DNM1 via its N-terminal SH3 domains. The C-terminal SH3 domain binds a complex containing actin, tubulin, Hsp70 and actin-regulatory proteins, such as ENAH, EVL, WIRE, CR16, WAVE1 and NAP1L1. Interacts with FASLG. Interacts (via SH3 domain 6) with WASL. Interacts (via SH3 domain 6) interacts with ENAH. Interacts (via C-terminal domain) with TJP1; required for the apical cell-cell junction localization of DNMBP. In terms of tissue distribution, widely expressed.

The protein resides in the cytoplasm. It is found in the golgi apparatus. Its subcellular location is the golgi stack. It localises to the cytoskeleton. The protein localises to the synapse. The protein resides in the cell junction. Functionally, plays a critical role as a guanine nucleotide exchange factor (GEF) for CDC42 in several intracellular processes associated with the actin and microtubule cytoskeleton. Regulates the structure of apical junctions in epithelial cells. Participates in the normal lumenogenesis of epithelial cell cysts by regulating spindle orientation. Plays a role in ciliogenesis. May play a role in membrane trafficking between the cell surface and the Golgi. This Rattus norvegicus (Rat) protein is Dynamin-binding protein.